The chain runs to 75 residues: Large ribosomal subunit protein uL29 (75 aa).

Belongs to the universal ribosomal protein uL29 family.

The protein is Large ribosomal subunit protein uL29 of Pyrobaculum aerophilum (strain ATCC 51768 / DSM 7523 / JCM 9630 / CIP 104966 / NBRC 100827 / IM2).